A 233-amino-acid polypeptide reads, in one-letter code: Ubiquinone biosynthesis O-methyltransferase (233 aa).

Positions 37, 56, 77, and 121 each coordinate S-adenosyl-L-methionine.

Belongs to the methyltransferase superfamily. UbiG/COQ3 family.

The catalysed reaction is a 3-demethylubiquinol + S-adenosyl-L-methionine = a ubiquinol + S-adenosyl-L-homocysteine + H(+). It carries out the reaction a 3-(all-trans-polyprenyl)benzene-1,2-diol + S-adenosyl-L-methionine = a 2-methoxy-6-(all-trans-polyprenyl)phenol + S-adenosyl-L-homocysteine + H(+). Its pathway is cofactor biosynthesis; ubiquinone biosynthesis. Functionally, O-methyltransferase that catalyzes the 2 O-methylation steps in the ubiquinone biosynthetic pathway. The protein is Ubiquinone biosynthesis O-methyltransferase of Azoarcus sp. (strain BH72).